The chain runs to 293 residues: Indole-3-glycerol phosphate synthase (293 aa).

The protein belongs to the TrpC family.

The enzyme catalyses 1-(2-carboxyphenylamino)-1-deoxy-D-ribulose 5-phosphate + H(+) = (1S,2R)-1-C-(indol-3-yl)glycerol 3-phosphate + CO2 + H2O. Its pathway is amino-acid biosynthesis; L-tryptophan biosynthesis; L-tryptophan from chorismate: step 4/5. The protein is Indole-3-glycerol phosphate synthase of Rippkaea orientalis (strain PCC 8801 / RF-1) (Cyanothece sp. (strain PCC 8801)).